The sequence spans 356 residues: Peptide chain release factor 1 (356 aa).

N5-methylglutamine is present on Gln233.

Belongs to the prokaryotic/mitochondrial release factor family. Methylated by PrmC. Methylation increases the termination efficiency of RF1.

The protein localises to the cytoplasm. Functionally, peptide chain release factor 1 directs the termination of translation in response to the peptide chain termination codons UAG and UAA. This is Peptide chain release factor 1 from Bacillus licheniformis (strain ATCC 14580 / DSM 13 / JCM 2505 / CCUG 7422 / NBRC 12200 / NCIMB 9375 / NCTC 10341 / NRRL NRS-1264 / Gibson 46).